Reading from the N-terminus, the 92-residue chain is uncharacterized protein (92 aa).

The HTH cro/C1-type domain maps to 25-83 (LEEKLKQEKIDRKYLAQVTNIPYTTVSRIMRAEANREFNPEIDTILKIAKYFNCTMDEV). The segment at residues 36-55 (RKYLAQVTNIPYTTVSRIMR) is a DNA-binding region (H-T-H motif).

This is an uncharacterized protein from Rickettsia prowazekii (strain Madrid E).